Reading from the N-terminus, the 538-residue chain is Nucleobase-ascorbate transporter 7 (538 aa).

Positions 1–11 (MAGGGGGGGGV) are enriched in gly residues. Positions 1–20 (MAGGGGGGGGVAPPLKHDGL) are disordered. A run of 12 helical transmembrane segments spans residues 45 to 65 (AILL…LIPT), 81 to 101 (MVQT…FFGT), 103 to 123 (LPAV…IILA), 143 to 163 (IQGA…SGLW), 166 to 186 (VVRL…GFGL), 191 to 211 (FPLL…LLLF), 229 to 249 (FAVI…TVGG), 295 to 315 (FAMM…YIVV), 372 to 394 (VVQI…AIFA), 398 to 420 (APVV…LSLL), 432 to 452 (FILG…NQYT), and 471 to 491 (INVP…FLDV).

Belongs to the nucleobase:cation symporter-2 (NCS2) (TC 2.A.40) family. In terms of tissue distribution, expressed exclusively in ovules.

It is found in the cell membrane. The protein is Nucleobase-ascorbate transporter 7 (NAT7) of Arabidopsis thaliana (Mouse-ear cress).